A 281-amino-acid polypeptide reads, in one-letter code: Phosphoglycerate mutase-like protein AT74H (281 aa).

Catalysis depends on histidine 17, which acts as the Tele-phosphohistidine intermediate. Glutamate 109 functions as the Proton donor/acceptor in the catalytic mechanism.

This sequence belongs to the phosphoglycerate mutase family.

Functionally, may play a role in carbohydrates metabolism. This Arabidopsis thaliana (Mouse-ear cress) protein is Phosphoglycerate mutase-like protein AT74H.